The following is a 314-amino-acid chain: Olfactory receptor 5P51 (314 aa).

At 1-28 the chain is on the extracellular side; that stretch reads MAFLEDGNHTAVTEFVLFGLTDDPVLRV. Asn8 carries N-linked (GlcNAc...) asparagine glycosylation. Residues 29 to 49 form a helical membrane-spanning segment; it reads ILFIIFLCIYLVNVSGNLSTI. Over 50 to 57 the chain is Cytoplasmic; it reads LLIRVSSQ. Residues 58 to 78 form a helical membrane-spanning segment; it reads LHHPMYFFLSHLASVDVGYSS. The Extracellular portion of the chain corresponds to 79–102; it reads TVTPKMLANFLLERSTISYLGCTI. Cys100 and Cys192 are joined by a disulfide. A helical membrane pass occupies residues 103 to 123; it reads QLFSGAFVGTLECFLLATMAY. At 124–136 the chain is on the cytoplasmic side; that stretch reads DRFIAICNPLLYS. A helical transmembrane segment spans residues 137-157; that stretch reads TKMSTQVCIQLLVGSYIGGFL. Residues 158 to 199 lie on the Extracellular side of the membrane; that stretch reads NASSFLLSFFPLLFCGPNRVNHYSCDLTPLIELSCSGSNVPI. A helical membrane pass occupies residues 200 to 220; sequence VPASFCSAFVIIVTVSVIAIS. Residues 221 to 240 are Cytoplasmic-facing; that stretch reads YTYILITILKMRSTEGRQKA. The helical transmembrane segment at 241-261 threads the bilayer; it reads FSTCTSHLTAVTLYYGTVTFI. Residues 262 to 274 lie on the Extracellular side of the membrane; it reads YVMPKSSYSTDQN. Residues 275–295 traverse the membrane as a helical segment; it reads KVVSVFYTVVIPMLNPIIYSL. Residues 296–314 are Cytoplasmic-facing; it reads RNNEIKGALKRQLARKIFS.

It belongs to the G-protein coupled receptor 1 family.

Its subcellular location is the cell membrane. Potential odorant receptor. The polypeptide is Olfactory receptor 5P51 (Mus musculus (Mouse)).